A 212-amino-acid polypeptide reads, in one-letter code: Ropporin-1 (212 aa).

An RIIa domain is found at 12 to 43; sequence PELPELLKQFTKAAIRSQPQDLIQWAAEYFGA. Residue serine 56 is modified to Phosphoserine. The interaction with RHPN1 stretch occupies residues 209 to 212; that stretch reads VRLE.

This sequence belongs to the ropporin family. Homodimer. Interacts with AKAP3. May interact with SPA17. Interacts with RHPN1. Interacts with FSCB; the interaction increases upon spermatozoa capacitation conditions. Interacts with CFAP61. Post-translationally, sumoylated, sumoylation decreases upon spermatozoa capacitation conditions.

It is found in the cell projection. It localises to the cilium. Its subcellular location is the flagellum. Its function is as follows. Important for male fertility. With ROPN1L, involved in fibrous sheath integrity and sperm motility, plays a role in PKA-dependent signaling processes required for spermatozoa capacitation. The sequence is that of Ropporin-1 (ROPN1) from Bos taurus (Bovine).